A 340-amino-acid polypeptide reads, in one-letter code: Glyceraldehyde-3-phosphate dehydrogenase 2 (340 aa).

Residues Arg-12–Ile-13, Arg-78, and Thr-120 contribute to the NADP(+) site. D-glyceraldehyde 3-phosphate is bound by residues Ser-151–Thr-153 and Thr-182. Cys-152 serves as the catalytic Nucleophile. Asn-183 is a binding site for NADP(+). D-glyceraldehyde 3-phosphate-binding positions include Arg-197, Thr-210–Gly-211, and Arg-233. NADP(+) is bound at residue Asn-315.

The protein belongs to the glyceraldehyde-3-phosphate dehydrogenase family. As to quaternary structure, homotetramer. Interacts with BrxC. In response to oxidative stress, the active site Cys likely reacts with bacillithiol (BSH) to form mixed disulfides to protect the Cys residue against overoxidation. S-bacillithiolation presumably leads to loss of catalytic activity. Debacillithiolation by monothiol bacilliredoxin BrxC restores the activity.

The protein resides in the cytoplasm. The catalysed reaction is D-glyceraldehyde 3-phosphate + phosphate + NADP(+) = (2R)-3-phospho-glyceroyl phosphate + NADPH + H(+). It catalyses the reaction D-glyceraldehyde 3-phosphate + phosphate + NAD(+) = (2R)-3-phospho-glyceroyl phosphate + NADH + H(+). The protein operates within carbohydrate biosynthesis; gluconeogenesis. Its function is as follows. Involved in the gluconeogenesis. Catalyzes the oxidative phosphorylation of glyceraldehyde 3-phosphate (G3P) to 1,3-bisphosphoglycerate (BPG) using the cofactor NADP. The first reaction step involves the formation of a hemiacetal intermediate between G3P and a cysteine residue, and this hemiacetal intermediate is then oxidized to a thioester, with concomitant reduction of NADP to NADPH. The reduced NADPH is then exchanged with the second NADP, and the thioester is attacked by a nucleophilic inorganic phosphate to produce BPG. The chain is Glyceraldehyde-3-phosphate dehydrogenase 2 from Bacillus subtilis (strain 168).